The chain runs to 473 residues: Membrane-bound acylglycerophosphatidylinositol O-acyltransferase MBOAT7 (473 aa).

Residues 1 to 5 (MTPEE) are Cytoplasmic-facing. Residues 6–22 (WTYLMVLLISIPVGFLF) traverse the membrane as a helical segment. The Lumenal segment spans residues 23-33 (KKAGPGLKRWG). The chain crosses the membrane as a helical span at residues 34-57 (AAAVGLGLTLFTCGPHSLHSLITI). Residues 58 to 73 (LGTWALIQAQPCSCHA) are Cytoplasmic-facing. Residues 74–93 (LALAWTFSYLLFFRALSLLG) form a helical membrane-spanning segment. Residues 94–194 (LPTPTPFTNA…VPSLRPLLRR (101 aa)) lie on the Lumenal side of the membrane. Residues 195 to 212 (AWPAPLFGLLFLLSSHLF) form a helical membrane-spanning segment. Residues 213 to 231 (PLEAVREDAFYARPLPTRL) lie on the Cytoplasmic side of the membrane. The helical transmembrane segment at 232–261 (FYMIPVFFAFRMRFYVAWIAAECGCIAAGF) threads the bilayer. Residues 262 to 426 (GAYPVAAKAR…LSMADTLRYW (165 aa)) lie on the Lumenal side of the membrane. N-linked (GlcNAc...) asparagine glycosylation occurs at Asn321. A helical transmembrane segment spans residues 427–447 (ASIYFWVHFLALACLGLGLVL). Residues 448 to 473 (GGGSPSKRKTPSQATSSQAKEKLREE) are Cytoplasmic-facing. Positions 451–473 (SPSKRKTPSQATSSQAKEKLREE) are disordered.

This sequence belongs to the membrane-bound acyltransferase family. Interacts with SPTSSA; the interaction facilitates MBOAT7 location to mitochondria-associated membranes (MAMs).

The protein resides in the endoplasmic reticulum membrane. The enzyme catalyses a 1-acyl-sn-glycero-3-phospho-(1D-myo-inositol) + an acyl-CoA = a 1,2-diacyl-sn-glycero-3-phospho-(1D-myo-inositol) + CoA. It carries out the reaction 1-octadecanoyl-sn-glycero-3-phospho-(1D-myo-inositol) + (5Z,8Z,11Z,14Z)-eicosatetraenoyl-CoA = 1-octadecanoyl-2-(5Z,8Z,11Z,14Z-eicosatetraenoyl)-sn-glycero-3-phospho-(1D-myo-inositol) + CoA. The catalysed reaction is a 1-acyl-sn-glycero-3-phospho-(1D-myo-inositol) + (5Z,8Z,11Z,14Z)-eicosatetraenoyl-CoA = a 1-acyl-2-(5Z,8Z,11Z,14Z-eicosatetraenoyl)-sn-glycero-3-phospho-(1D-myo-inositol) + CoA. It catalyses the reaction (5Z,8Z,11Z,14Z)-eicosatetraenoyl-CoA + 1-hexadecanoyl-sn-glycero-3-phosphocholine = 1-hexadecanoyl-2-(5Z,8Z,11Z,14Z-eicosatetraenoyl)-sn-glycero-3-phosphocholine + CoA. The protein operates within lipid metabolism; phospholipid metabolism. Functionally, acyltransferase which catalyzes the transfer of an acyl group from an acyl-CoA to a lysophosphatidylinositol (1-acylglycerophosphatidylinositol or LPI) leading to the production of a phosphatidylinositol (1,2-diacyl-sn-glycero-3-phosphoinositol or PI) and participates in the reacylation step of the phospholipid remodeling pathway also known as the Lands cycle. Prefers arachidonoyl-CoA as the acyl donor, thus contributing to the regulation of free levels arachidonic acid in cell. In liver, participates in the regulation of triglyceride metabolism through the phosphatidylinositol acyl-chain remodeling regulation. This Mus musculus (Mouse) protein is Membrane-bound acylglycerophosphatidylinositol O-acyltransferase MBOAT7.